The following is a 469-amino-acid chain: Trigger factor (469 aa).

The 82-residue stretch at 162–243 (GDFVSIDLSA…VKSVKERELP (82 aa)) folds into the PPIase FKBP-type domain. Positions 438 to 469 (GPSGEQAAEDSAEESTDAAEGEAAEDADDTDK) are disordered. Residues 444 to 469 (AAEDSAEESTDAAEGEAAEDADDTDK) show a composition bias toward acidic residues.

Belongs to the FKBP-type PPIase family. Tig subfamily.

It localises to the cytoplasm. The enzyme catalyses [protein]-peptidylproline (omega=180) = [protein]-peptidylproline (omega=0). Functionally, involved in protein export. Acts as a chaperone by maintaining the newly synthesized protein in an open conformation. Functions as a peptidyl-prolyl cis-trans isomerase. This chain is Trigger factor, found in Mycolicibacterium smegmatis (strain ATCC 700084 / mc(2)155) (Mycobacterium smegmatis).